The chain runs to 139 residues: MAMSSLWWTAILLLALTVSMCYGVPTYQDFLYKHMDFPKTSFPSNAAYCNVMMVRRGMTAHGRCKSFNTFVHTDPRNLNTLCINQPDQALRTTRRHFRITDCKLIRSHPTCRYSGNQFNRRVRVGCRGGLPVHLDGTSP.

Residues 1 to 23 form the signal peptide; the sequence is MAMSSLWWTAILLLALTVSMCYG. Histidine 34 acts as the Proton acceptor in catalysis. Disulfide bonds link cysteine 49–cysteine 102, cysteine 64–cysteine 111, and cysteine 82–cysteine 126. A substrate-binding site is contributed by 65–69; the sequence is KSFNT. Catalysis depends on histidine 133, which acts as the Proton donor.

The protein belongs to the pancreatic ribonuclease family.

It is found in the secreted. The chain is Ribonuclease homolog from Gallus gallus (Chicken).